Reading from the N-terminus, the 99-residue chain is Nucleoid-associated protein str1598 (99 aa).

The protein belongs to the YbaB/EbfC family. In terms of assembly, homodimer.

It is found in the cytoplasm. The protein localises to the nucleoid. Functionally, binds to DNA and alters its conformation. May be involved in regulation of gene expression, nucleoid organization and DNA protection. The chain is Nucleoid-associated protein str1598 from Streptococcus thermophilus (strain CNRZ 1066).